The chain runs to 315 residues: beta-hydroxyaspartate dehydratase (315 aa).

An N6-(pyridoxal phosphate)lysine modification is found at lysine 53. Pyridoxal 5'-phosphate contacts are provided by residues asparagine 80, glycine 179–methionine 183, and threonine 303.

Requires pyridoxal 5'-phosphate as cofactor.

The catalysed reaction is (3S)-3-hydroxy-D-aspartate = iminosuccinate + H2O. Its function is as follows. Catalyzes the dehydration of (2R,3S)-beta-hydroxyaspartate ((3S)-3-hydroxy-D-aspartate) into iminosuccinate. Is essential for the growth of P.denitrificans in the presence of glycolate and glyoxylate since it functions in glyoxylate assimilation via the beta-hydroxyaspartate cycle (BHAC). The chain is beta-hydroxyaspartate dehydratase from Paracoccus denitrificans (strain Pd 1222).